The sequence spans 385 residues: Initiation-specific alpha-1,6-mannosyltransferase (385 aa).

At 1 to 15 (MLQLREPQMVHKHLK) the chain is on the cytoplasmic side. Residues 16 to 36 (LAVLGIVVIFTTYFIISSLSS) traverse the membrane as a helical; Signal-anchor for type II membrane protein segment. Residues 37-385 (PTSTHKTEYN…KDDGMPEMEQ (349 aa)) are Lumenal-facing. A DXD motif motif is present at residues 189-191 (DID).

This sequence belongs to the glycosyltransferase 32 family. It depends on Mn(2+) as a cofactor.

It localises to the endoplasmic reticulum membrane. The protein localises to the golgi apparatus membrane. It carries out the reaction Transfers an alpha-D-mannosyl residue from GDP-mannose into lipid-linked oligosaccharide, forming an alpha-(1-&gt;6)-D-mannosyl-D-mannose linkage.. In terms of biological role, mannosyltransferase involved in outer chain elongation of asparagine-linked oligosaccharides of the type Man(9)GlcNAc(2). Adds the first alpha-1,6-mannose to the Man(8)GlcNAc(2) and Man(9)GlcNAc(2), but not Man(5)GlcNAc(2), endoplasmic reticulum intermediates. Represents the first enzymatic event required for synthesis of outer chain mannose linkages on yeast secretory proteins. N-glycan outer chain epitopes play a crucial role in the host-fungal interaction, virulence, and host immune response such as interleukin synthesis or phagocytosis by neutrophils. This chain is Initiation-specific alpha-1,6-mannosyltransferase, found in Candida albicans (strain SC5314 / ATCC MYA-2876) (Yeast).